A 434-amino-acid polypeptide reads, in one-letter code: Enolase (434 aa).

Glutamine 168 contacts (2R)-2-phosphoglycerate. Glutamate 210 (proton donor) is an active-site residue. 3 residues coordinate Mg(2+): aspartate 247, glutamate 292, and aspartate 319. 4 residues coordinate (2R)-2-phosphoglycerate: lysine 344, arginine 373, serine 374, and lysine 395. The Proton acceptor role is filled by lysine 344.

Belongs to the enolase family. The cofactor is Mg(2+).

It is found in the cytoplasm. It localises to the secreted. The protein localises to the cell surface. The enzyme catalyses (2R)-2-phosphoglycerate = phosphoenolpyruvate + H2O. Its pathway is carbohydrate degradation; glycolysis; pyruvate from D-glyceraldehyde 3-phosphate: step 4/5. In terms of biological role, catalyzes the reversible conversion of 2-phosphoglycerate (2-PG) into phosphoenolpyruvate (PEP). It is essential for the degradation of carbohydrates via glycolysis. In Endomicrobium trichonymphae, this protein is Enolase.